The primary structure comprises 318 residues: Olfactory receptor 13C7 (318 aa).

At 1–27 (MVSANQTASVTEFILLGLSAHPKLEKT) the chain is on the extracellular side. Residues 28 to 48 (FFVLILLMYLVILLGNGVLIL) form a helical membrane-spanning segment. The Cytoplasmic segment spans residues 49-61 (MTVSNSHLHMPMY). The helical transmembrane segment at 62 to 82 (FFLGNLSFLDICYTTSSVPLI) threads the bilayer. The Extracellular segment spans residues 83 to 100 (LDSFLTPRKTISFSACAV). The chain crosses the membrane as a helical span at residues 101-121 (QMFLSFAMGATECVLLSMMAF). Topologically, residues 122–181 (DRYVAICNPLRYPVVMSKAAYMPKAAGSWVAGSTASMVQTSLAMRLPFCGDNIINHFTCE) are cytoplasmic. A helical transmembrane segment spans residues 182 to 202 (ILAVLKLACADISVNVISMGV). Over 203-205 (TNV) the chain is Extracellular. Residues 206–226 (IFLGVPVLFISFSYVFIIATI) form a helical membrane-spanning segment. Residues 227–238 (LRIPSAEGRKKA) are Cytoplasmic-facing. The helical transmembrane segment at 239–259 (FSTCSAHLTVVVIFYGTILFM) threads the bilayer. Residues 260–278 (YGKPKSKDPLGADKQDLAD) are Extracellular-facing. Residues 279–289 (KLISLFYGVVT) traverse the membrane as a helical segment. Over 290–318 (PMLNPIIYSLRNKDVKAAVRDLIFQKCFA) the chain is Cytoplasmic.

This sequence belongs to the G-protein coupled receptor 1 family.

The protein resides in the cell membrane. Functionally, odorant receptor. This is Olfactory receptor 13C7 from Homo sapiens (Human).